The chain runs to 602 residues: MEKEVIAYLDNETIIDSQSVKNTNLKEIYFDNSKESLEVIRHSCAHLMAQAIKSLYPEAKFFVGPVIEDGFYYDFCVESKIGEEDLVKIEKKMKELAEAKIEISKYKITKNEALAKFQNDDLKQEVLLRIPDGAVSIYKQGEFEDLCRGPHVPNTKFLRFFKLTRVAGAYLGGDEKREMLTRIYGTAFADKESLKEYLAIIEEAKKRDHRKLGIELKLFTFNDEIGGGLPIWLGNGARLRSKLEHMLYKIHRLRGYEPVRGPELLKADAWKISGHYANYKENMYFTQIDEQEYGIKPMNCVGHIKVYQSDVRSYRDLPLKFFEYGVVHRHEKSGVLHGLFRVREFTQDDAHIFCMPSQIKEQVLEILAFVDNLMKLFDFSYEMEISTKPEKAIGDDEIWEVATKALKEALDEQGLKYGIDEGGGAFYGPKIDIKITDALKRKWQCGTIQVDFNLPSRFKLEYTDSDNEKKQPVMLHRAILGSFERFIGILTEHCAGEFPFFIAPTAVGIVPIGEAHIAYAKEIQKELLELNIDSEVYEKNESLSKKIRIAEKQKLPMILVLGDDEVAKRSVALRDRRAKEQKNLSLDEFIKLVKEKMSEVYF.

Residues 208–499 form a catalytic region; that stretch reads DHRKLGIELK…LTEHCAGEFP (292 aa). Positions 300, 351, and 476 each coordinate Zn(2+).

The protein belongs to the class-II aminoacyl-tRNA synthetase family. In terms of assembly, homodimer. Requires Zn(2+) as cofactor.

Its subcellular location is the cytoplasm. The enzyme catalyses tRNA(Thr) + L-threonine + ATP = L-threonyl-tRNA(Thr) + AMP + diphosphate + H(+). Functionally, catalyzes the attachment of threonine to tRNA(Thr) in a two-step reaction: L-threonine is first activated by ATP to form Thr-AMP and then transferred to the acceptor end of tRNA(Thr). Also edits incorrectly charged L-seryl-tRNA(Thr). The sequence is that of Threonine--tRNA ligase from Campylobacter jejuni subsp. doylei (strain ATCC BAA-1458 / RM4099 / 269.97).